The chain runs to 425 residues: MATSLGSNTYNRQNWEDSDFPILCQTCLGENPYIRMTKEKFGKECKICARPFTVFRWCPGVRMRFKKTEVCQTCSKMKNVCQTCLLDLEYGLPIQVRDTGLSVKDEVPRSDVNKEYYTQNMEREIANSDGTRPVGLLGKAPSSSDMLLKLARTTPYYKRNRPHICSFWVKGECKRGEECPYRHEKPTDPDDPLADQNIKDRYYGINDPVANKLLMRASTMPRLDVPDDKSITTLYIGGLGENVTDSELRNHFYQFGEIRTITIVQRQQCAFIQFATRQAAETAAEKSFNKLIINGRRLNVKWGRSQAARGKGEKDGVTESGIRLEPVPGLPGALPPPPVSDEDASTNYFNLAPTPSPAVMNLGLPPPPGVTMPPPPGFGPPMFHTMDPMAPPVPPPMALRPPGQVHYPSQDPQRMGAHASRHGGP.

Residues 159–186 (RNRPHICSFWVKGECKRGEECPYRHEKP) form a C3H1-type zinc finger. Positions 232 to 305 (TTLYIGGLGE…RRLNVKWGRS (74 aa)) constitute an RRM domain. Disordered stretches follow at residues 304-331 (RSQA…PGLP) and 384-425 (HTMD…HGGP). The span at 389–399 (MAPPVPPPMAL) shows a compositional bias: pro residues.

The protein belongs to the SLT11 family. Component of the pre-catalytic and catalytic spliceosome complexes. Component of the postcatalytic spliceosome P complex.

Its subcellular location is the nucleus. It is found in the cytoplasm. In terms of biological role, required for pre-mRNA splicing as component of the activated spliceosome. Involved in the first step of pre-mRNA splicing. Binds directly to the internal stem-loop (ISL) domain of the U6 snRNA and to the pre-mRNA intron near the 5' splice site during the activation and catalytic phases of the spliceosome cycle. Required for normal early embryogenesis. The protein is Pre-mRNA-splicing factor RBM22 (rbm22) of Danio rerio (Zebrafish).